We begin with the raw amino-acid sequence, 74 residues long: Putative membrane protein insertion efficiency factor (74 aa).

This sequence belongs to the UPF0161 family.

The protein resides in the cell inner membrane. Functionally, could be involved in insertion of integral membrane proteins into the membrane. This is Putative membrane protein insertion efficiency factor from Blochmanniella floridana.